We begin with the raw amino-acid sequence, 921 residues long: MASNILTQIFGSRNDRLLKTYRKIVDRINALETQYEQLGDDELRAKTQEFKNRVAAGEALDAILPEAFAVVREGSKRVMKMRHFDVQMLGGISLHNGKISEMRTGEGKTLTATLPVYLNALTGKGVHVVTVNDYLASRDARWMGKLYNFLGLTVGINLPNMSREEKQAAYNADITYGTNNEYGFDYLRDNMVYEVGDRVQRGLNYAIVDEVDSILIDEARTPLIISGQAEDHTEMYLAMNKVVPLLTRQEGEADPRTGEGVTKPGDFTIDEKTRQVFLTEQGHESAERILFNLGLIAESATLYDPANISLMHHLYAALRANLLYHRDQHYVVQDGEVVIVDEFTGRLMSGRRWSDGLHQAVEAKEGVQIQAENQTLASITFQNYFRLYGKLAGMTGTADTEAYEFQEIYGLETTVIPPNRVSRRDDQLDRVYKTTREKYEAAIKDIRECYERGQPVLVGTTSIENSEIIDQLLEKEKLPHQVLNAKQHAREADIVAQAGRLKVITIATNMAGRGTDIVLGGNLEKLIEAVEADESMDTAAKEAEIARLRARWSEEHEQVKALGGLRIIATERHESRRIDNQLRGRSGRQGDPGSSRFYLSLDDPLMRIFAGDRVKAIMERLKMPDGEAIEAGIVTRSIESAQRKVEARNFDIRKQLLEYDDVANDQRKVIYQQRNDIMDAGSLQAQIESLREGCFTDLTRQYVPAESVEEQWDIAGLEKVLLEEWQISLPLAGELESATAITDEDILEKVIAAANVAFADKVEKIGQENFTQFERLVLLQSIDTHWREHLSALDYLRQGIHLRGYAQKQPKQEYKREAFELFGQLLDSVKNEVTKVLMTVKIQSGEQLEQAAEEMENRAESISNVTYTAPTETGEAETRVDEDTLRRVSLASGIAVPRVGRNDPCPCGSGKKYKLCHGRLN.

ATP-binding positions include Gln-87, Gly-105–Thr-109, and Asp-516. The Zn(2+) site is built by Cys-905, Cys-907, Cys-916, and His-917.

Belongs to the SecA family. Monomer and homodimer. Part of the essential Sec protein translocation apparatus which comprises SecA, SecYEG and auxiliary proteins SecDF-YajC and YidC. The cofactor is Zn(2+).

The protein resides in the cell inner membrane. The protein localises to the cytoplasm. It carries out the reaction ATP + H2O + cellular proteinSide 1 = ADP + phosphate + cellular proteinSide 2.. In terms of biological role, part of the Sec protein translocase complex. Interacts with the SecYEG preprotein conducting channel. Has a central role in coupling the hydrolysis of ATP to the transfer of proteins into and across the cell membrane, serving both as a receptor for the preprotein-SecB complex and as an ATP-driven molecular motor driving the stepwise translocation of polypeptide chains across the membrane. The sequence is that of Protein translocase subunit SecA from Polaromonas sp. (strain JS666 / ATCC BAA-500).